The following is a 300-amino-acid chain: Actin-related protein 2/3 complex subunit 2-A (300 aa).

It belongs to the ARPC2 family. Component of the Arp2/3 complex composed of actr2/arp2, actr3/arp3, arpc1 (arpc1a or arpc1b), arpc2, arpc3, arpc4 and arpc5.

The protein resides in the cytoplasm. It is found in the cytoskeleton. The protein localises to the cell projection. Its subcellular location is the nucleus. Actin-binding component of the Arp2/3 complex, a multiprotein complex that mediates actin polymerization upon stimulation by nucleation-promoting factor (NPF). The Arp2/3 complex mediates the formation of branched actin networks in the cytoplasm, providing the force for cell motility. In addition to its role in the cytoplasmic cytoskeleton, the Arp2/3 complex also promotes actin polymerization in the nucleus, thereby regulating gene transcription and repair of damaged DNA. The Arp2/3 complex promotes homologous recombination (HR) repair in response to DNA damage by promoting nuclear actin polymerization, leading to drive motility of double-strand breaks (DSBs). The polypeptide is Actin-related protein 2/3 complex subunit 2-A (arpc2-a) (Xenopus laevis (African clawed frog)).